The sequence spans 292 residues: Norajmaline N-methyltransferase (292 aa).

Residues 71–80 form an SAM motif I region; sequence KNMLDIGCGV. The tract at residues 134 to 142 is SAM motif II; that stretch reads KDGTFDLVL. The Vacuolar targeting signal motif lies at 135-141; the sequence is DGTFDLV. Residues 161–170 are SAM motif III; it reads IRVAAPGAPI.

It belongs to the class I-like SAM-binding methyltransferase superfamily. gTMT family. In terms of assembly, homodimer. Mainly expressed in mature roots and, to a lesser extent, in leaves, stems and flowers.

It is found in the vacuole membrane. The catalysed reaction is norajmaline + S-adenosyl-L-methionine = ajmaline + S-adenosyl-L-homocysteine + H(+). It catalyses the reaction 4-methylnorajmaline + S-adenosyl-L-methionine = 4-methylajmaline + S-adenosyl-L-homocysteine + H(+). It functions in the pathway alkaloid biosynthesis; ajmaline biosynthesis. Functionally, N-methyltransferase involved in the biosynthesis of ajmaline-type monoterpenoid indole alkaloids (MIAs) natural products, important plant-derived pharmaceuticals used in the therapy of heart disorders. Catalyzes the indole N-methylation of norajmaline to produce ajmaline. Also able, with a lower efficiency, to mediates the conversion of 4-methylnorajmaline to 4-methylajmaline. The protein is Norajmaline N-methyltransferase of Rauvolfia serpentina (Serpentine wood).